The sequence spans 207 residues: Killer cell lectin-like receptor subfamily F member 2 (207 aa).

At 1 to 30 (MENEDGYMTLSFKNRCKSKQKSKDFSLYPQ) the chain is on the cytoplasmic side. Tyr-7 bears the Phosphotyrosine mark. A helical; Signal-anchor for type II membrane protein transmembrane segment spans residues 31–51 (YYCLLLIFGCIVILIFIMTGI). Residues 52–207 (DLKFWHKKMD…ILTHNGTSGV (156 aa)) lie on the Extracellular side of the membrane. Asn-67 carries an N-linked (GlcNAc...) asparagine glycan. 3 disulfide bridges follow: Cys-78/Cys-89, Cys-106/Cys-193, and Cys-172/Cys-185. The 110-residue stretch at 85-194 (NEGKCYWFST…CSSTFKGICQ (110 aa)) folds into the C-type lectin domain. Asn-202 carries an N-linked (GlcNAc...) asparagine glycan.

As to quaternary structure, homodimer; non-disulfide-linked. Interacts with CLEC2A. Post-translationally, N-glycosylated.

It is found in the cell membrane. Its function is as follows. C-type lectin-like receptor involved in natural killer cell mediated cytotoxicity and cytokine secretion in keratinocytes via its interaction with CLEC2A. Triggers degranulation in a SYK-dependent manner and stimulates SYK phosphotyrosinylation without recruiting SYK directly. The sequence is that of Killer cell lectin-like receptor subfamily F member 2 (KLRF2) from Homo sapiens (Human).